The chain runs to 147 residues: Large ribosomal subunit protein uL15 (147 aa).

A disordered region spans residues 1-45 (MTIKLHHLRPAPGAKSDKIRVGRGEGGKRGKTAGRGTKGTKARKN). Basic and acidic residues predominate over residues 15-28 (KSDKIRVGRGEGGK).

Belongs to the universal ribosomal protein uL15 family. As to quaternary structure, part of the 50S ribosomal subunit.

In terms of biological role, binds to the 23S rRNA. The polypeptide is Large ribosomal subunit protein uL15 (Rhodococcus jostii (strain RHA1)).